Here is a 149-residue protein sequence, read N- to C-terminus: MYQTLQAAYAAKRKARRFAVQGIYEWQMSHNPVHEIEARTRAENAMHKVDLNYYHELLTQVIAQHEDLDALLIPVLDREIDALDGVELATLRLGAYELRDHLEIPYRVVLDEAIELAKHFGGADSHKYINGVLDRLSSTLRSAEKQQAK.

It belongs to the NusB family.

Functionally, involved in transcription antitermination. Required for transcription of ribosomal RNA (rRNA) genes. Binds specifically to the boxA antiterminator sequence of the ribosomal RNA (rrn) operons. This chain is Transcription antitermination protein NusB, found in Acinetobacter baumannii (strain SDF).